A 252-amino-acid polypeptide reads, in one-letter code: Acyltransferase PGAP2 (252 aa).

Over 1–22 the chain is Cytoplasmic; sequence MVPVGPERGANSLFSLRFTTFA. The chain crosses the membrane as a helical span at residues 23 to 43; the sequence is VGTVSLPLFAFLFCIVWSLLF. At 44 to 77 the chain is on the lumenal side; it reads NFSETTATHCHVPNYLPSVSAAIGGETPQRYIWR. The chain crosses the membrane as a helical span at residues 78–98; it reads LCIGLHSAPRFLVGVAYLHYY. The Cytoplasmic portion of the chain corresponds to 99–111; the sequence is QGTPCSSPAYPRL. The chain crosses the membrane as a helical span at residues 112–132; sequence CHLNFLLNCCEIFFLILLTYV. At 133-142 the chain is on the lumenal side; sequence SSSENYEVHK. A helical membrane pass occupies residues 143-163; it reads LGFMAFMLFSVGYMFVTCSLW. Topologically, residues 164-184 are cytoplasmic; it reads RVARKGSGSLEERTSYAWKKR. The chain crosses the membrane as a helical span at residues 185–205; that stretch reads LFGFYLLMFLSSILVYIWHNM. Over 206 to 208 the chain is Lumenal; it reads YCE. Residues 209-229 form a helical membrane-spanning segment; it reads AGVYTVFALLEYLVVLSNMGF. At 230–252 the chain is on the cytoplasmic side; sequence HMTAWWDFGNKELMICSPGDKRI.

It belongs to the PGAP2 family.

Its subcellular location is the golgi apparatus membrane. Functionally, involved in the fatty acid remodeling steps of GPI-anchor maturation where the unsaturated acyl chain at sn-2 of inositol phosphate is replaced by a saturated stearoyl chain. May catalyze the second step of the fatty acid remodeling, by reacylating a lyso-GPI intermediate at sn-2 of inositol phosphate by a saturated chain. The fatty acid remodeling steps is critical for the integration of GPI-APs into lipid rafts. In Xenopus tropicalis (Western clawed frog), this protein is Acyltransferase PGAP2.